A 406-amino-acid polypeptide reads, in one-letter code: Phloroisovalerophenone synthase (406 aa).

Cysteine 171 is an active-site residue.

The protein belongs to the thiolase-like superfamily. Chalcone/stilbene synthases family.

It carries out the reaction 3-methylbutanoyl-CoA + 3 malonyl-CoA + 3 H(+) = phlorisovalerophenone + 3 CO2 + 4 CoA. Produces 3-methyl-1-(2,4,6-trihydroxyphenyl)butan-1-one (phloroisovalerophenone). The sequence is that of Phloroisovalerophenone synthase (VPS) from Psilotum nudum (Whisk fern).